The primary structure comprises 209 residues: Kunitz trypsin inhibitor 1 (209 aa).

Residues 1-22 (MKATISITTIFLVVALAAPSLA) form the signal peptide. Cystine bridges form between Cys63–Cys107 and Cys154–Cys162. The N-linked (GlcNAc...) asparagine glycan is linked to Asn156.

The protein belongs to the protease inhibitor I3 (leguminous Kunitz-type inhibitor) family.

In terms of biological role, exhibits Kunitz trypsin protease inhibitor activity. This is Kunitz trypsin inhibitor 1 from Arabidopsis thaliana (Mouse-ear cress).